Consider the following 723-residue polypeptide: Phenylalanine ammonia-lyase (723 aa).

Y77 serves as the catalytic Proton donor/acceptor. A cross-link (5-imidazolinone (Ala-Gly)) is located at residues 182–184; sequence ASG. Position 183 is a 2,3-didehydroalanine (Ser) (S183). 7 residues coordinate (E)-cinnamate: N241, Q336, R342, N372, K443, E471, and N474.

This sequence belongs to the PAL/histidase family. In terms of processing, contains an active site 4-methylidene-imidazol-5-one (MIO), which is formed autocatalytically by cyclization and dehydration of residues Ala-Ser-Gly.

The protein resides in the cytoplasm. The catalysed reaction is L-phenylalanine = (E)-cinnamate + NH4(+). It functions in the pathway secondary metabolite biosynthesis. Its pathway is phenylpropanoid metabolism; trans-cinnamate biosynthesis; trans-cinnamate from L-phenylalanine: step 1/1. Its function is as follows. Phenylalanine ammonia-lyase; part of the gene cluster that mediates the biosynthesis of squalestatin S1 (SQS1, also known as zaragozic acid A), a heavily oxidized fungal polyketide that offers potent cholesterol lowering activity by targeting squalene synthase (SS). SQS1 is composed of a 2,8-dioxobicyclic[3.2.1]octane-3,4,5-tricarboxyclic acid core that is connected to two lipophilic polyketide arms. These initial steps feature the priming of an unusual benzoic acid starter unit onto the highly reducing polyketide synthase clz14, followed by oxaloacetate extension and product release to generate a tricarboxylic acid containing product. The phenylalanine ammonia lyase (PAL) clz10 and the acyl-CoA ligase clz12 are involved in transforming phenylalanine into benzoyl-CoA. The citrate synthase-like protein clz17 is involved in connecting the C-alpha-carbons of the hexaketide chain and oxaloacetate to afford the tricarboxylic acid unit. The potential hydrolytic enzymes, clz11 and clz13, are in close proximity to pks2 and may participate in product release. On the other side, the tetraketide arm is synthesized by a the squalestatin tetraketide synthase clz2 and enzymatically esterified to the core in the last biosynthetic step, by the acetyltransferase clz6. The biosynthesis of the tetraketide must involve 3 rounds of chain extension. After the first and second rounds methyl-transfer occurs, and in all rounds of extension the ketoreductase and dehydratase are active. The enoyl reductase and C-MeT of clz2 are not active in the final round of extension. The acetyltransferase clz6 appears to have a broad substrate selectivity for its acyl CoA substrate, allowing the in vitro synthesis of novel squalestatins. The biosynthesis of SQS1 requires several oxidative steps likely performed by oxidoreductases clz3, clz15 and clz16. Finally, in support of the identification of the cluster as being responsible for SQS1 production, the cluster contains a gene encoding a putative squalene synthase (SS) clz20, suggesting a likely mechanism for self-resistance. The polypeptide is Phenylalanine ammonia-lyase (Cochliobolus lunatus (Filamentous fungus)).